A 94-amino-acid chain; its full sequence is MSCKVLEELEEVIRRRIEEGNPESYTYRLYSSGIPHIARKVGEEAVEAAVAAIAEGRERLAEEAADLLYHLLVLLNAAGLSLRDVCNVLEKRRK.

Belongs to the PRA-PH family.

Its subcellular location is the cytoplasm. It carries out the reaction 1-(5-phospho-beta-D-ribosyl)-ATP + H2O = 1-(5-phospho-beta-D-ribosyl)-5'-AMP + diphosphate + H(+). The protein operates within amino-acid biosynthesis; L-histidine biosynthesis; L-histidine from 5-phospho-alpha-D-ribose 1-diphosphate: step 2/9. This chain is Phosphoribosyl-ATP pyrophosphatase, found in Pyrobaculum arsenaticum (strain DSM 13514 / JCM 11321 / PZ6).